A 1250-amino-acid polypeptide reads, in one-letter code: MVHPVKLGRNVRMSYSKIDEVIDMPNLIEIQKNSYEQFLKEGFKEVFKDVNPITDYTGNLILEFVDYSLDEPPKYSVDECKERDATYAAPLKVKVRLINKETGEVKEQEIFMGDFPLMTETGTFIINGAERVIVSQLVRSPGIYYAMKIDKAGKQLFSNTVIPNRGAWLEYETDSNDVLSVRIDRTRKLPLTVLVRALGYGTDLEITELFGEDERILATIQKDSTKTEEEGLLEIYKRLRPGEPPTVESAKALLHGLFFDPKRYDLAKPGRFKFNKKLSIAARIHGFIAGENIKDPDTGEIIVAEGETISREKAETIQNAGVNTVILRVDGKNVKVIGNDMVDIKRYVDFDPKEIGINEKVKRDVLMEILEEYKGKGDDAIKKALQERIDDLIPKHITKEDIISSISYIIGLSYGIGSTDDIDHLGNRRLRSVGELLQNQFRIGLSRMERVVRERMTIQDLDVVTPQALINIRPVAAAIKEFFGSSQLSQFMDQTNPLAELTHKRRLSALGPGGLSRERAGFEVRDVHHSHYGRMCPIETPEGPNIGLIGSLSTYARVNEYGFIETPYRKVSKEEPGKVTNEIVYLTADEEDEYIIAQANEPLDEEGRFISNKVVCRYKEEFIEVDPSKIDFMDVSPKQIVSVATSMIPFLENDDANRALMGANMQRQAVPLIKTESPIVGTGIEYRAARDSGVVILAKNPGVVEKVTANEIIIRTKDGKRDTYKLLKYMRSNQGTCINQRPIVKKGEEVEAGDVIADGPSTDNGEIALGKNVLVGFMTWEGYNYEDAILISERLVKDDVFTSIHIEEYEAEARDTKLGPEDITREIPNVSEDALKDLNSEGIIRIGAEVRAGDILVGKVTPKGETELTAEERLLRAIFGEKAREVRDTSLRVPHGESGIVVDVKIFTRENGDELAPGVNKLVRVYVAQKRKISVGDKMAGRHGNKGVISRILPVEDMPFLPDGTPLDIVLNPLGVPSRMNIGQVLEVHLGYAAKALGWKVATPVFDGATEEDIVQTLRKAGLAEDGKSILYDGRTGEPFENRVTVGYMYMLKLAHLVDDKIHARSTGPYSLVTQQPLGGKAQFGGQRFGEMEVWALEAYGAAYTLQEILTVKSDDVVGRVKTYEAIVKGENVPEPGIPECFKVLIKELQSLCLDVKVYSEEQEEIAIKESVEDDLEELNVNIEGREDEVNFNEFNDIGEEITDEDLEVEDFDLQDLNDDDINPDDTIDAELDDNLFDDDFDDTFDDDDL.

Positions 1215-1250 (QDLNDDDINPDDTIDAELDDNLFDDDFDDTFDDDDL) are disordered.

This sequence belongs to the RNA polymerase beta chain family. In terms of assembly, the RNAP catalytic core consists of 2 alpha, 1 beta, 1 beta' and 1 omega subunit. When a sigma factor is associated with the core the holoenzyme is formed, which can initiate transcription.

It carries out the reaction RNA(n) + a ribonucleoside 5'-triphosphate = RNA(n+1) + diphosphate. DNA-dependent RNA polymerase catalyzes the transcription of DNA into RNA using the four ribonucleoside triphosphates as substrates. The sequence is that of DNA-directed RNA polymerase subunit beta from Acetivibrio thermocellus (strain ATCC 27405 / DSM 1237 / JCM 9322 / NBRC 103400 / NCIMB 10682 / NRRL B-4536 / VPI 7372) (Clostridium thermocellum).